Here is a 349-residue protein sequence, read N- to C-terminus: Pseudouridylate synthase TRUB1 (349 aa).

Position 2 is an N-acetylalanine (Ala2). Position 11 is a phosphoserine (Ser11). Residue Asp121 is the Nucleophile of the active site.

Belongs to the pseudouridine synthase TruB family. In terms of tissue distribution, highly expressed in heart, skeletal muscle and liver. Expressed at lower levels in lung, small intestine, kidney and spleen.

The protein resides in the nucleus. Its subcellular location is the cytoplasm. It localises to the cytosol. The enzyme catalyses a uridine in mRNA = a pseudouridine in mRNA. It carries out the reaction a uridine in tRNA = a pseudouridine in tRNA. The catalysed reaction is uridine(55) in tRNA = pseudouridine(55) in tRNA. Pseudouridine synthase that catalyzes pseudouridylation of mRNAs and tRNAs. Mediates pseudouridylation of mRNAs with the consensus sequence 5'-GUUCNANNC-3', harboring a stem-loop structure. Constitutes the major pseudouridine synthase acting on mRNAs. Also catalyzes pseudouridylation of some tRNAs, including synthesis of pseudouridine(55) from uracil-55, in the psi GC loop of a subset of tRNAs. Promotes the processing of pri-let-7 microRNAs (pri-miRNAs) independently of its RNA pseudouridylate synthase activity. Acts by binding to the stem-loop structure on pri-let-7, preventing LIN28-binding (LIN28A and/or LIN28B), thereby enhancing the interaction between pri-let-7 and the microprocessor DGCR8, which mediates miRNA maturation. The sequence is that of Pseudouridylate synthase TRUB1 from Homo sapiens (Human).